The primary structure comprises 620 residues: Delta(14)-sterol reductase LBR (620 aa).

Positions 1–62 (MPGRKFADGE…DIKPLKSFKQ (62 aa)) constitute a Tudor domain. The Nuclear portion of the chain corresponds to 1 to 215 (MPGRKFADGE…TPQRRDLEFG (215 aa)). The interval 52-111 (SDIKPLKSFKQRKSGSTSSSPSRRRSSRSRSRSRSRSPGRAPKGSRRSVSASYQADAKEK) is disordered. N6-acetyllysine is present on Lys-55. A phosphoserine mark is found at Ser-59 and Ser-67. Phosphoserine; by CDK1 occurs at positions 71 and 86. A compositionally biased stretch (basic residues) spans 73 to 88 (SRRRSSRSRSRSRSRS). Ser-88 carries the phosphoserine modification. O-linked (GlcNAc) serine glycosylation occurs at Ser-96. A phosphoserine mark is found at Ser-99 and Ser-101. Thr-123 bears the Phosphothreonine mark. Ser-133 carries the phosphoserine modification. At Thr-205 the chain carries Phosphothreonine. 8 helical membrane passes run 216–236 (GVPGALLIMLGLPACVFLLLL), 263–283 (VCGVYLLWFFLQALFSLLPVG), 304–324 (LYAFILTSAAVGTAVFWDIEL), 331–351 (FLQFALAAIVFSVVLSVYLYA), 452–472 (IIHDGFGFMLAFGDLVWVPFT), 486–506 (DLSWPLTSVIIALKLCGYVIF), 525–547 (LAHLKTIPTSTWKSLLVSGWWGF), and 566–586 (PCGFNHILPYFYVIYFTALLI). N6-acetyllysine occurs at positions 599 and 606.

Belongs to the ERG4/ERG24 family. Interacts with CBX5. Interacts with DNA. Interaction with DNA is sequence independent with higher affinity for supercoiled and relaxed circular DNA than linear DNA. Interacts with lamin B. Interacts with CLNK. Interacts with TMEM147; promoting LBR localization to the nucleus inner membrane. In terms of processing, phosphorylated by CDK1 in mitosis when the inner nuclear membrane breaks down into vesicles that dissociate from the lamina and the chromatin. It is phosphorylated by different protein kinases in interphase when the membrane is associated with these structures. Phosphorylation of LBR and HP1 proteins may be responsible for some of the alterations in chromatin organization and nuclear structure which occur at various times during the cell cycle. Phosphorylated by SRPK1. In late anaphase LBR is dephosphorylated, probably by PP1 and/or PP2A, allowing reassociation with chromatin.

The protein resides in the nucleus inner membrane. Its subcellular location is the nucleus. It is found in the cytoplasm. It localises to the endoplasmic reticulum membrane. The enzyme catalyses 5alpha-cholest-8,14-dien-3beta-ol + NADPH + H(+) = 5alpha-cholest-8-en-3beta-ol + NADP(+). It catalyses the reaction 4,4-dimethyl-5alpha-cholesta-8,24-dien-3beta-ol + NADP(+) = 4,4-dimethyl-5alpha-cholesta-8,14,24-trien-3beta-ol + NADPH + H(+). It carries out the reaction 4,4-dimethyl-8,14-cholestadien-3beta-ol + NADPH + H(+) = 4,4-dimethyl-5alpha-cholest-8-en-3beta-ol + NADP(+). It functions in the pathway steroid biosynthesis; cholesterol biosynthesis. In terms of biological role, catalyzes the reduction of the C14-unsaturated bond of lanosterol, as part of the metabolic pathway leading to cholesterol biosynthesis. Plays a critical role in myeloid cell cholesterol biosynthesis which is essential to both myeloid cell growth and functional maturation. Mediates the activation of NADPH oxidases, perhaps by maintaining critical levels of cholesterol required for membrane lipid raft formation during neutrophil differentiation. Anchors the lamina and the heterochromatin to the inner nuclear membrane. This Rattus norvegicus (Rat) protein is Delta(14)-sterol reductase LBR (Lbr).